A 152-amino-acid chain; its full sequence is D-aminoacyl-tRNA deacylase (152 aa).

The Gly-cisPro motif, important for rejection of L-amino acids motif lies at 142-143; sequence GP.

This sequence belongs to the DTD family. As to quaternary structure, homodimer.

Its subcellular location is the cytoplasm. The catalysed reaction is glycyl-tRNA(Ala) + H2O = tRNA(Ala) + glycine + H(+). It carries out the reaction a D-aminoacyl-tRNA + H2O = a tRNA + a D-alpha-amino acid + H(+). An aminoacyl-tRNA editing enzyme that deacylates mischarged D-aminoacyl-tRNAs. Also deacylates mischarged glycyl-tRNA(Ala), protecting cells against glycine mischarging by AlaRS. Acts via tRNA-based rather than protein-based catalysis; rejects L-amino acids rather than detecting D-amino acids in the active site. By recycling D-aminoacyl-tRNA to D-amino acids and free tRNA molecules, this enzyme counteracts the toxicity associated with the formation of D-aminoacyl-tRNA entities in vivo and helps enforce protein L-homochirality. The chain is D-aminoacyl-tRNA deacylase from Burkholderia multivorans (strain ATCC 17616 / 249).